A 172-amino-acid polypeptide reads, in one-letter code: MTERQSSFSYNDLIDSSNGKMWGPDNAQLPAPPMLMMDRITHIDDETGEHGKGQIVAELDIKPDLWFFDCHFKGDPVMPGCLGLDAMWQLVGFFLCWKGNPGKGRALGVGEVKFTGQITPDCKKVRYVIDLKRVIQRRLIMAIGDGRVEVDGKTIYTAKDLRVGLFKPGEMA.

H71 is an active-site residue.

The protein belongs to the thioester dehydratase family. FabA subfamily. In terms of assembly, homodimer.

The protein localises to the cytoplasm. The enzyme catalyses a (3R)-hydroxyacyl-[ACP] = a (2E)-enoyl-[ACP] + H2O. The catalysed reaction is (3R)-hydroxydecanoyl-[ACP] = (2E)-decenoyl-[ACP] + H2O. It carries out the reaction (2E)-decenoyl-[ACP] = (3Z)-decenoyl-[ACP]. It functions in the pathway lipid metabolism; fatty acid biosynthesis. Its function is as follows. Necessary for the introduction of cis unsaturation into fatty acids. Catalyzes the dehydration of (3R)-3-hydroxydecanoyl-ACP to E-(2)-decenoyl-ACP and then its isomerization to Z-(3)-decenoyl-ACP. Can catalyze the dehydratase reaction for beta-hydroxyacyl-ACPs with saturated chain lengths up to 16:0, being most active on intermediate chain length. The polypeptide is 3-hydroxydecanoyl-[acyl-carrier-protein] dehydratase (Maricaulis maris (strain MCS10) (Caulobacter maris)).